A 323-amino-acid chain; its full sequence is Phospho-N-acetylmuramoyl-pentapeptide-transferase (323 aa).

A run of 9 helical transmembrane segments spans residues 5–25 (SAVL…PSLI), 57–77 (LLFI…QGLI), 81–101 (LWAL…DDSI), 118–138 (LCQV…GFQM), 140–160 (FGTT…IVGF), 173–193 (LVSG…LVNL), 196–216 (PGYP…LGFF), 225–247 (IFMG…LLLH), and 302–322 (IVFW…ILLV).

It belongs to the glycosyltransferase 4 family. MraY subfamily. Requires Mg(2+) as cofactor.

The protein localises to the cell membrane. The catalysed reaction is UDP-N-acetyl-alpha-D-muramoyl-L-alanyl-gamma-D-glutamyl-L-lysyl-D-alanyl-D-alanine + di-trans,octa-cis-undecaprenyl phosphate = Mur2Ac(oyl-L-Ala-gamma-D-Glu-L-Lys-D-Ala-D-Ala)-di-trans,octa-cis-undecaprenyl diphosphate + UMP. The protein operates within cell wall biogenesis; peptidoglycan biosynthesis. Catalyzes the initial step of the lipid cycle reactions in the biosynthesis of the cell wall peptidoglycan: transfers peptidoglycan precursor phospho-MurNAc-pentapeptide from UDP-MurNAc-pentapeptide onto the lipid carrier undecaprenyl phosphate, yielding undecaprenyl-pyrophosphoryl-MurNAc-pentapeptide, known as lipid I. The protein is Phospho-N-acetylmuramoyl-pentapeptide-transferase of Limosilactobacillus reuteri (strain DSM 20016) (Lactobacillus reuteri).